A 238-amino-acid polypeptide reads, in one-letter code: Protein TIFY 3A (238 aa).

One can recognise a Tify 1 domain in the interval 39–74 (EPDASTQLTIIFGGSCRVFNGVPAQKVQEIIRIAFA). The short motif at 101-120 (PIARRRSLQRFLEKRRDRST) is the Jas 1 element. A Nuclear localization signal 1 motif is present at residues 103–110 (ARRRSLQR). One can recognise a Tify 2 domain in the interval 125 to 160 (SMILPSQLTIIFGGSFSVFDGIPAEKVQEILHIAAA). Positions 197 to 222 (PIARRRSLQRFFEKRRHRFVHTKPYS) match the Jas 2 motif. The Nuclear localization signal 2 motif lies at 199–206 (ARRRSLQR). The segment at 219–238 (KPYSATTSEADKNETSPIVT) is disordered.

This sequence belongs to the TIFY/JAZ family. As to quaternary structure, interacts with MYC2, MYB21, MYB24, AFPH2/NINJA, TIFY10A/JAZ1, TIFY10B/JAZ2, TIFY6B/JAZ3, TIFY6A/JAZ4, TIFY7/JAZ9 and TIFY9/JAZ10. Post-translationally, ubiquitinated. Targeted for degradation by the SCF(COI1) E3 ubiquitin ligase-proteasome pathway during jasmonate signaling.

It is found in the nucleus. Repressor of jasmonate (JA) responses. Targets MYC2, MYC3 and MYC4 that are JA-dependent transcription activators. The polypeptide is Protein TIFY 3A (TIFY3A) (Arabidopsis thaliana (Mouse-ear cress)).